Here is a 273-residue protein sequence, read N- to C-terminus: Ethanolamine ammonia-lyase small subunit (273 aa).

Adenosylcob(III)alamin contacts are provided by Val-164, Glu-185, and Cys-214.

This sequence belongs to the EutC family. As to quaternary structure, the basic unit is a heterodimer which dimerizes to form tetramers. The heterotetramers trimerize; 6 large subunits form a core ring with 6 small subunits projecting outwards. It depends on adenosylcob(III)alamin as a cofactor.

Its subcellular location is the bacterial microcompartment. The catalysed reaction is ethanolamine = acetaldehyde + NH4(+). Its pathway is amine and polyamine degradation; ethanolamine degradation. Its function is as follows. Catalyzes the deamination of various vicinal amino-alcohols to oxo compounds. Allows this organism to utilize ethanolamine as the sole source of nitrogen and carbon in the presence of external vitamin B12. The chain is Ethanolamine ammonia-lyase small subunit from Pseudomonas aeruginosa (strain LESB58).